The following is a 239-amino-acid chain: Ribosomal RNA small subunit methyltransferase G (239 aa).

S-adenosyl-L-methionine contacts are provided by residues Gly-78, Phe-83, 129 to 130 (AE), and Arg-148.

This sequence belongs to the methyltransferase superfamily. RNA methyltransferase RsmG family.

It localises to the cytoplasm. In terms of biological role, specifically methylates the N7 position of a guanine in 16S rRNA. In Clostridium botulinum (strain 657 / Type Ba4), this protein is Ribosomal RNA small subunit methyltransferase G.